Reading from the N-terminus, the 123-residue chain is DNA-directed RNA polymerase I subunit RPA12 (123 aa).

Residues cysteine 17, cysteine 20, cysteine 35, cysteine 38, cysteine 84, and cysteine 87 each coordinate Zn(2+). The segment at 17–38 adopts a C4-type zinc-finger fold; it reads CPDCGSVLPLPGIQDTVICSRC. A TFIIS-type zinc finger spans residues 80–120; the sequence is IDRRCPRCGHEGMAYHTRQMRSADEGQTVFYTCINCKFQEK. The Hairpin motif lies at 103-104; sequence DE. Zn(2+) contacts are provided by cysteine 112 and cysteine 115.

It belongs to the archaeal RpoM/eukaryotic RPA12/RPB9/RPC11 RNA polymerase family. In terms of assembly, component of the RNA polymerase I (Pol I) complex consisting of 13 subunits: a ten-subunit catalytic core composed of POLR1A/RPA1, POLR1B/RPA2, POLR1C/RPAC1, POLR1D/RPAC2, POLR1H/RPA12, POLR2E/RPABC1, POLR2F/RPABC2, POLR2H/RPABC3, POLR2K/RPABC4 and POLR2L/RPABC5; a mobile stalk subunit POLR1F/RPA43 protruding from the core and additional subunits homologous to general transcription factors POLR1E/RPA49 and POLR1G/RPA34. Part of Pol I pre-initiation complex (PIC), in which Pol I core assembles with RRN3 and promoter-bound UTBF and SL1/TIF-IB complex.

The protein resides in the nucleus. Its subcellular location is the nucleolus. Core component of RNA polymerase I (Pol I), a DNA-dependent RNA polymerase which synthesizes ribosomal RNA precursors using the four ribonucleoside triphosphates as substrates. Can mediate Pol I proofreading of the nascent RNA transcript. Anchors into the Pol I active site to monitor transcription fidelity and cleave mis-incorporated 5'-ribonucleotides. This is DNA-directed RNA polymerase I subunit RPA12 from Mus musculus (Mouse).